The chain runs to 497 residues: Galactose-1-phosphate uridylyltransferase (497 aa).

Belongs to the galactose-1-phosphate uridylyltransferase type 2 family.

The protein localises to the cytoplasm. The enzyme catalyses alpha-D-galactose 1-phosphate + UDP-alpha-D-glucose = alpha-D-glucose 1-phosphate + UDP-alpha-D-galactose. Its pathway is carbohydrate metabolism; galactose metabolism. This Clostridium acetobutylicum (strain ATCC 824 / DSM 792 / JCM 1419 / IAM 19013 / LMG 5710 / NBRC 13948 / NRRL B-527 / VKM B-1787 / 2291 / W) protein is Galactose-1-phosphate uridylyltransferase.